The following is a 652-amino-acid chain: Sodium-dependent phosphate transporter 2 (652 aa).

At M1–E5 the chain is on the extracellular side. Residues Y6–A26 form a helical membrane-spanning segment. The Cytoplasmic segment spans residues N27 to Q46. A helical membrane pass occupies residues A47–G67. Residues E68–T86 lie on the Extracellular side of the membrane. An N-linked (GlcNAc...) asparagine glycan is attached at N81. The chain crosses the membrane as a helical span at residues L87–F107. At L108–R109 the chain is on the cytoplasmic side. Residues L110–I130 form a helical membrane-spanning segment. The Extracellular portion of the chain corresponds to G131 to K142. Residues I143 to V163 form a helical membrane-spanning segment. Residues L164–T190 lie on the Cytoplasmic side of the membrane. The helical transmembrane segment at I191–P211 threads the bilayer. The Extracellular segment spans residues M212–W213. A helical transmembrane segment spans residues A214–V234. Residues C235–E482 lie on the Cytoplasmic side of the membrane. S253, S256, S259, and S268 each carry phosphoserine. A disordered region spans residues E273 to P307. A compositionally biased stretch (polar residues) spans L295–G304. Phosphoserine occurs at positions 316 and 385. The tract at residues S458–E477 is disordered. A helical membrane pass occupies residues V483 to G503. Residues G504–A530 are Extracellular-facing. Residues A531 to W551 form a helical membrane-spanning segment. The Cytoplasmic portion of the chain corresponds to G552–G571. The chain crosses the membrane as a helical span at residues F572 to S586. The Extracellular segment spans residues N587–S593. The helical transmembrane segment at T594–R609 threads the bilayer. Over S610 to N621 the chain is Cytoplasmic. The chain crosses the membrane as a helical span at residues I622–A642. Residues L643–V652 lie on the Extracellular side of the membrane.

Belongs to the inorganic phosphate transporter (PiT) (TC 2.A.20) family. In terms of assembly, homodimer. As to expression, ubiquitously expressed.

Its subcellular location is the cell membrane. The protein resides in the apical cell membrane. The enzyme catalyses 2 Na(+)(out) + phosphate(out) = 2 Na(+)(in) + phosphate(in). Its function is as follows. Sodium-phosphate symporter which preferentially transports the monovalent form of phosphate with a stoichiometry of two sodium ions per phosphate ion. Plays a critical role in the determination of bone quality and strength by providing phosphate for bone mineralization. Required to maintain normal cerebrospinal fluid phosphate levels. Mediates phosphate-induced calcification of vascular smooth muscle cells (VCMCs) and can functionally compensate for loss of SLC20A1 in VCMCs. (Microbial infection) Functions as a retroviral receptor and confers human cells susceptibility to infection to amphotropic murine leukemia virus (A-MuLV), 10A1 murine leukemia virus (10A1 MLV) and some feline leukemia virus subgroup B (FeLV-B) variants. The protein is Sodium-dependent phosphate transporter 2 (SLC20A2) of Homo sapiens (Human).